The sequence spans 90 residues: Small ribosomal subunit protein uS15 (90 aa).

This sequence belongs to the universal ribosomal protein uS15 family. In terms of assembly, part of the 30S ribosomal subunit. Forms a bridge to the 50S subunit in the 70S ribosome, contacting the 23S rRNA.

Functionally, one of the primary rRNA binding proteins, it binds directly to 16S rRNA where it helps nucleate assembly of the platform of the 30S subunit by binding and bridging several RNA helices of the 16S rRNA. Forms an intersubunit bridge (bridge B4) with the 23S rRNA of the 50S subunit in the ribosome. The chain is Small ribosomal subunit protein uS15 from Campylobacter hominis (strain ATCC BAA-381 / DSM 21671 / CCUG 45161 / LMG 19568 / NCTC 13146 / CH001A).